A 78-amino-acid polypeptide reads, in one-letter code: U5-ctenitoxin-Pk1a (78 aa).

Cystine bridges form between Cys6–Cys23, Cys13–Cys29, Cys20–Cys52, Cys22–Cys40, Cys31–Cys38, Cys58–Cys73, and Cys69–Cys77.

As to expression, expressed by the venom gland.

Its subcellular location is the secreted. Functionally, lethal neurotoxin. Causes spastic paralysis and death in mice in 4-6 minutes after intracerebroventricular injection at dose levels of 1.5 ug per mouse. The chain is U5-ctenitoxin-Pk1a from Phoneutria keyserlingi (Brazilian wandering spider).